The primary structure comprises 395 residues: DNA polymerase IV (395 aa).

Residues 7-187 enclose the UmuC domain; it reads FFHVDIDAFF…LPLKDVWGVG (181 aa). Mg(2+) is bound by residues D11 and D105. E106 is a catalytic residue.

It belongs to the DNA polymerase type-Y family. As to quaternary structure, monomer. Mg(2+) serves as cofactor.

It localises to the cytoplasm. The enzyme catalyses DNA(n) + a 2'-deoxyribonucleoside 5'-triphosphate = DNA(n+1) + diphosphate. Its function is as follows. Poorly processive, error-prone DNA polymerase involved in untargeted mutagenesis. Copies undamaged DNA at stalled replication forks, which arise in vivo from mismatched or misaligned primer ends. These misaligned primers can be extended by PolIV. Exhibits no 3'-5' exonuclease (proofreading) activity. May be involved in translesional synthesis, in conjunction with the beta clamp from PolIII. This Treponema denticola (strain ATCC 35405 / DSM 14222 / CIP 103919 / JCM 8153 / KCTC 15104) protein is DNA polymerase IV.